The sequence spans 275 residues: Erythroagglutinating phytohemagglutinin (275 aa).

The N-terminal stretch at 1 to 21 is a signal peptide; sequence MASSNLLSLALFLVLLTHANS. N-linked (GlcNAc...) (high mannose) asparagine glycosylation is present at asparagine 33. N-linked (GlcNAc...) asparagine glycosylation is found at asparagine 81 and asparagine 101.

This sequence belongs to the leguminous lectin family.

Its function is as follows. This insecticidal carbohydrate-binding lectin is toxic for the cowpea weevil. The protein is Erythroagglutinating phytohemagglutinin (DLEC1) of Phaseolus vulgaris (Kidney bean).